The chain runs to 508 residues: Maturase K (508 aa).

The protein belongs to the intron maturase 2 family. MatK subfamily.

The protein localises to the plastid. The protein resides in the chloroplast. Its function is as follows. Usually encoded in the trnK tRNA gene intron. Probably assists in splicing its own and other chloroplast group II introns. In Cunninghamia lanceolata (China fir), this protein is Maturase K.